A 400-amino-acid polypeptide reads, in one-letter code: CinA-like protein (400 aa).

It belongs to the CinA family.

The polypeptide is CinA-like protein (Shigella flexneri).